Reading from the N-terminus, the 138-residue chain is Phosphoribosyl-AMP cyclohydrolase (138 aa).

Asp84 contacts Mg(2+). Residue Cys85 coordinates Zn(2+). Mg(2+) is bound by residues Asp86 and Asp88. Cys102 and Cys109 together coordinate Zn(2+).

The protein belongs to the PRA-CH family. Homodimer. Requires Mg(2+) as cofactor. The cofactor is Zn(2+).

It is found in the cytoplasm. The enzyme catalyses 1-(5-phospho-beta-D-ribosyl)-5'-AMP + H2O = 1-(5-phospho-beta-D-ribosyl)-5-[(5-phospho-beta-D-ribosylamino)methylideneamino]imidazole-4-carboxamide. The protein operates within amino-acid biosynthesis; L-histidine biosynthesis; L-histidine from 5-phospho-alpha-D-ribose 1-diphosphate: step 3/9. Its function is as follows. Catalyzes the hydrolysis of the adenine ring of phosphoribosyl-AMP. In Burkholderia lata (strain ATCC 17760 / DSM 23089 / LMG 22485 / NCIMB 9086 / R18194 / 383), this protein is Phosphoribosyl-AMP cyclohydrolase.